The following is a 201-amino-acid chain: 2-phospho-L-lactate guanylyltransferase (201 aa).

The protein belongs to the CofC family. Homodimer.

It catalyses the reaction (2S)-2-phospholactate + GTP + H(+) = (2S)-lactyl-2-diphospho-5'-guanosine + diphosphate. It functions in the pathway cofactor biosynthesis; coenzyme F420 biosynthesis. In terms of biological role, guanylyltransferase that catalyzes the activation of (2S)-2-phospholactate (2-PL) as (2S)-lactyl-2-diphospho-5'-guanosine, via the condensation of 2-PL with GTP. It is involved in the biosynthesis of coenzyme F420, a hydride carrier cofactor. In Natronomonas pharaonis (strain ATCC 35678 / DSM 2160 / CIP 103997 / JCM 8858 / NBRC 14720 / NCIMB 2260 / Gabara) (Halobacterium pharaonis), this protein is 2-phospho-L-lactate guanylyltransferase.